Here is a 1078-residue protein sequence, read N- to C-terminus: Phosphatidylinositol-3,5-bisphosphate 3-phosphatase MTMR4 (1078 aa).

The Myotubularin phosphatase domain maps to 154-571; it reads DHVKSRFQIE…RALQLWTAVY (418 aa). The segment at 267–290 is disordered; sequence RMPNGNPSNKGNNDGSDNSDTDFD. Residues 270–282 are compositionally biased toward low complexity; it reads NGNPSNKGNNDGS. A 1,2-diacyl-sn-glycero-3-phospho-(1D-myo-inositol-3,5-bisphosphate)-binding residues include N321, N346, and I347. A 1,2-diacyl-sn-glycero-3-phospho-(1D-myo-inositol-3-phosphate) contacts are provided by N321, N346, and I347. The Phosphocysteine intermediate role is filled by C408. 8 residues coordinate a 1,2-diacyl-sn-glycero-3-phospho-(1D-myo-inositol-3,5-bisphosphate): S409, D410, G411, W412, D413, R414, K450, and R454. Residues S409, D410, G411, W412, D413, and R414 each contribute to the a 1,2-diacyl-sn-glycero-3-phospho-(1D-myo-inositol-3-phosphate) site. Residue R454 participates in a 1,2-diacyl-sn-glycero-3-phospho-(1D-myo-inositol-3-phosphate) binding. Polar residues predominate over residues 629–648; the sequence is SSDPNLNNHQGNLESCSSSK. Residues 629–694 are disordered; it reads SSDPNLNNHQ…SGSATNQNNN (66 aa). Residues 904 to 935 are a coiled coil; the sequence is VQQRLRQMEASYKQEVDLLRRQVWELQLQLEI. Residues 960–982 form a disordered region; sequence DGSDMDDLYSDKSEDRLSEASWE. Basic and acidic residues predominate over residues 968–982; the sequence is YSDKSEDRLSEASWE. The FYVE-type zinc-finger motif lies at 997-1057; that stretch reads DHMASHCFNC…VCNTCYDHIQ (61 aa). Zn(2+) contacts are provided by C1003, C1006, C1019, C1022, C1027, C1030, C1049, and C1052.

The protein belongs to the protein-tyrosine phosphatase family. Non-receptor class myotubularin subfamily. In terms of assembly, homooligomeric.

The protein resides in the early endosome membrane. It localises to the recycling endosome membrane. It is found in the late endosome membrane. The protein localises to the cytoplasmic vesicle. Its subcellular location is the phagosome membrane. It catalyses the reaction a 1,2-diacyl-sn-glycero-3-phospho-(1D-myo-inositol-3-phosphate) + H2O = a 1,2-diacyl-sn-glycero-3-phospho-(1D-myo-inositol) + phosphate. The catalysed reaction is a 1,2-diacyl-sn-glycero-3-phospho-(1D-myo-inositol-3,5-bisphosphate) + H2O = a 1,2-diacyl-sn-glycero-3-phospho-(1D-myo-inositol-5-phosphate) + phosphate. The enzyme catalyses 1,2-dioctanoyl-sn-glycero-3-phospho-(1-D-myo-inositol-3-phosphate) + H2O = 1,2-dioctanoyl-sn-glycero-3-phospho-(1D-myo-inositol) + phosphate. It carries out the reaction 1,2-dioctanoyl-sn-glycero-3-phospho-(1D-myo-inositol-3,5-bisphosphate) + H2O = 1,2-dioctanoyl-sn-glycero-3-phospho-(1D-myo-inositol-5-phosphate) + phosphate. Lipid phosphatase that specifically dephosphorylates the D-3 position of phosphatidylinositol 3-phosphate and phosphatidylinositol 3,5-bisphosphate, generating phosphatidylinositol and phosphatidylinositol 5-phosphate. Decreases the levels of phosphatidylinositol 3-phosphate, a phospholipid found in cell membranes where it acts as key regulator of both cell signaling and intracellular membrane traffic, in a subset of endosomal membranes to negatively regulate both endocytic recycling and trafficking and/or maturation of endosomes toward lysosomes. Through phosphatidylinositol 3-phosphate turnover in phagosome membranes regulates phagocytosis and phagosome maturation. By decreasing phosphatidylinositol 3-monophosphate (PI3P) levels in immune cells it can also regulate the innate immune response. Beside its lipid phosphatase activity, can also function as a molecular adapter to regulate midbody abscission during mitotic cytokinesis. Can also negatively regulate TGF-beta and BMP signaling through Smad proteins dephosphorylation and retention in endosomes. The polypeptide is Phosphatidylinositol-3,5-bisphosphate 3-phosphatase MTMR4 (mtmr4) (Xenopus laevis (African clawed frog)).